The sequence spans 243 residues: Uridylate kinase (243 aa).

15 to 18 (KLSG) is a binding site for ATP. The segment at 23–28 (GSEGFG) is involved in allosteric activation by GTP. Gly57 serves as a coordination point for UMP. ATP-binding residues include Gly58 and Arg62. UMP is bound by residues Asp77 and 138 to 145 (TGNPFFTT). ATP-binding residues include Thr165, Tyr171, and Asp174.

This sequence belongs to the UMP kinase family. As to quaternary structure, homohexamer.

Its subcellular location is the cytoplasm. It carries out the reaction UMP + ATP = UDP + ADP. It participates in pyrimidine metabolism; CTP biosynthesis via de novo pathway; UDP from UMP (UMPK route): step 1/1. With respect to regulation, allosterically activated by GTP. Inhibited by UTP. In terms of biological role, catalyzes the reversible phosphorylation of UMP to UDP. This chain is Uridylate kinase, found in Vibrio cholerae serotype O1 (strain ATCC 39541 / Classical Ogawa 395 / O395).